Reading from the N-terminus, the 279-residue chain is Thymidylate synthase (279 aa).

Residue 132 to 133 (RR) participates in dUMP binding. C153 serves as the catalytic Nucleophile. DUMP-binding positions include 178-181 (RSND), N189, and 219-221 (HIY). D181 lines the (6R)-5,10-methylene-5,6,7,8-tetrahydrofolate pocket. (6R)-5,10-methylene-5,6,7,8-tetrahydrofolate is bound at residue A278.

It belongs to the thymidylate synthase family. Bacterial-type ThyA subfamily. Homodimer.

It localises to the cytoplasm. It catalyses the reaction dUMP + (6R)-5,10-methylene-5,6,7,8-tetrahydrofolate = 7,8-dihydrofolate + dTMP. It participates in pyrimidine metabolism; dTTP biosynthesis. Its function is as follows. Catalyzes the reductive methylation of 2'-deoxyuridine-5'-monophosphate (dUMP) to 2'-deoxythymidine-5'-monophosphate (dTMP) while utilizing 5,10-methylenetetrahydrofolate (mTHF) as the methyl donor and reductant in the reaction, yielding dihydrofolate (DHF) as a by-product. This enzymatic reaction provides an intracellular de novo source of dTMP, an essential precursor for DNA biosynthesis. This chain is Thymidylate synthase, found in Lactococcus lactis subsp. lactis (strain IL1403) (Streptococcus lactis).